Reading from the N-terminus, the 556-residue chain is 2-isopropylmalate synthase (556 aa).

The Pyruvate carboxyltransferase domain maps to proline 33–aspartate 307. Positions 42, 246, 248, and 282 each coordinate Mg(2+). Positions alanine 439–alanine 556 are regulatory domain.

Belongs to the alpha-IPM synthase/homocitrate synthase family. LeuA type 2 subfamily. Homodimer. It depends on Mg(2+) as a cofactor.

It is found in the cytoplasm. The enzyme catalyses 3-methyl-2-oxobutanoate + acetyl-CoA + H2O = (2S)-2-isopropylmalate + CoA + H(+). It participates in amino-acid biosynthesis; L-leucine biosynthesis; L-leucine from 3-methyl-2-oxobutanoate: step 1/4. Its function is as follows. Catalyzes the condensation of the acetyl group of acetyl-CoA with 3-methyl-2-oxobutanoate (2-ketoisovalerate) to form 3-carboxy-3-hydroxy-4-methylpentanoate (2-isopropylmalate). In Pseudomonas syringae pv. syringae (strain B728a), this protein is 2-isopropylmalate synthase.